A 156-amino-acid chain; its full sequence is Lipoprotein signal peptidase (156 aa).

The helical transmembrane segment at 62 to 82 (GNTVFMVLSAVIIAILSYTKI) threads the bilayer. Catalysis depends on residues Asp115 and Asp133. Residues 126 to 146 (WPAFNLADLTITCGVIVFLAM) traverse the membrane as a helical segment.

Belongs to the peptidase A8 family.

Its subcellular location is the cell inner membrane. The enzyme catalyses Release of signal peptides from bacterial membrane prolipoproteins. Hydrolyzes -Xaa-Yaa-Zaa-|-(S,diacylglyceryl)Cys-, in which Xaa is hydrophobic (preferably Leu), and Yaa (Ala or Ser) and Zaa (Gly or Ala) have small, neutral side chains.. It functions in the pathway protein modification; lipoprotein biosynthesis (signal peptide cleavage). Its function is as follows. This protein specifically catalyzes the removal of signal peptides from prolipoproteins. The sequence is that of Lipoprotein signal peptidase from Anaplasma phagocytophilum (strain HZ).